Consider the following 185-residue polypeptide: Large ribosomal subunit protein bL25 (185 aa).

It belongs to the bacterial ribosomal protein bL25 family. CTC subfamily. In terms of assembly, part of the 50S ribosomal subunit; part of the 5S rRNA/L5/L18/L25 subcomplex. Contacts the 5S rRNA. Binds to the 5S rRNA independently of L5 and L18.

In terms of biological role, this is one of the proteins that binds to the 5S RNA in the ribosome where it forms part of the central protuberance. This is Large ribosomal subunit protein bL25 from Chlamydia trachomatis serovar D (strain ATCC VR-885 / DSM 19411 / UW-3/Cx).